The chain runs to 304 residues: MWFKNLTLYRFNKPFSIETEALETALADFTFSPCGSQDVSKFGFSNALGKQGSTLVHSANNRHLICVTKEEKILPGQVIKESLEEKVAQIEDEENRKLAKKEKDALKDEIITSLLPRAFSRRSQTRALILPELEMILVDSSSATKAEELLALLRKALGSLPVIPLSFKAPVEANLTQWLKDGSAPLPFEMQDEAELKSAADEGGIVRFKQQDLKEDEVLAHLETGKEVHKLALHFGQSIALLLQSDASVKRLKFSEEFRAGNDELGNEDPMARLDADFALMGSELVALMHALVSALGGLEETQA.

Belongs to the RdgC family.

It is found in the cytoplasm. The protein localises to the nucleoid. Functionally, may be involved in recombination. The protein is Recombination-associated protein RdgC of Shewanella sp. (strain ANA-3).